Reading from the N-terminus, the 375-residue chain is Platelet-derived growth factor receptor-like protein (375 aa).

The signal sequence occupies residues 1-21 (MKIWLLLGLLLMHEALEDVTG). Residues 20 to 64 (TGQHPPKNKRPKEPGENRIKPTNKKVKPKIPKIKDRDSADPTPKT) form a disordered region. Over residues 40 to 50 (PTNKKVKPKIP) the composition is skewed to basic residues. The Ig-like C2-type 1 domain maps to 62 to 159 (PKTQSIMTQM…GYVCRRDEAK (98 aa)). C96 and C143 are disulfide-bonded. N-linked (GlcNAc...) asparagine glycans are attached at residues N132 and N219. Residues 272–373 (PSTTILASSN…GQTTVATTVE (102 aa)) form the Ig-like C2-type 2 domain. C293 and C357 are joined by a disulfide.

In terms of assembly, forms a complex composed of PDGFRL, TNK2 and GRB2.

Its subcellular location is the secreted. The chain is Platelet-derived growth factor receptor-like protein (PDGFRL) from Bos taurus (Bovine).